The sequence spans 367 residues: Probable dual-specificity RNA methyltransferase RlmN (367 aa).

The active-site Proton acceptor is the E92. In terms of domain architecture, Radical SAM core spans 98–326; sequence QEYGLSVCVT…YDTLKKNGIN (229 aa). The cysteines at positions 105 and 341 are disulfide-linked. Residues C112, C116, and C119 each coordinate [4Fe-4S] cluster. S-adenosyl-L-methionine is bound by residues 164–165, S196, 219–221, and N297; these read GE and SLH. The S-methylcysteine intermediate role is filled by C341.

Belongs to the radical SAM superfamily. RlmN family. [4Fe-4S] cluster serves as cofactor.

The protein resides in the cytoplasm. It carries out the reaction adenosine(2503) in 23S rRNA + 2 reduced [2Fe-2S]-[ferredoxin] + 2 S-adenosyl-L-methionine = 2-methyladenosine(2503) in 23S rRNA + 5'-deoxyadenosine + L-methionine + 2 oxidized [2Fe-2S]-[ferredoxin] + S-adenosyl-L-homocysteine. It catalyses the reaction adenosine(37) in tRNA + 2 reduced [2Fe-2S]-[ferredoxin] + 2 S-adenosyl-L-methionine = 2-methyladenosine(37) in tRNA + 5'-deoxyadenosine + L-methionine + 2 oxidized [2Fe-2S]-[ferredoxin] + S-adenosyl-L-homocysteine. Its function is as follows. Specifically methylates position 2 of adenine 2503 in 23S rRNA and position 2 of adenine 37 in tRNAs. This chain is Probable dual-specificity RNA methyltransferase RlmN, found in Listeria welshimeri serovar 6b (strain ATCC 35897 / DSM 20650 / CCUG 15529 / CIP 8149 / NCTC 11857 / SLCC 5334 / V8).